The chain runs to 463 residues: Probable diacyglycerol O-acyltransferase tgs1 (463 aa).

Methionine 1 carries the post-translational modification N-acetylmethionine. Histidine 137 (proton acceptor) is an active-site residue.

This sequence belongs to the long-chain O-acyltransferase family.

The catalysed reaction is an acyl-CoA + a 1,2-diacyl-sn-glycerol = a triacyl-sn-glycerol + CoA. It carries out the reaction di-(9Z)-octadecenoylglycerol + (9Z)-octadecenoyl-CoA = 1,2,3-tri-(9Z-octadecenoyl)-glycerol + CoA. It participates in glycerolipid metabolism; triacylglycerol biosynthesis. Its function is as follows. Catalyzes the terminal and only committed step in triacylglycerol synthesis by using diacylglycerol and fatty acyl CoA as substrates. Required for storage lipid synthesis. Functionally, upon expression in E.coli functions as a triacylglycerol synthase, making triacylglycerol (TG) from diolein and long-chain fatty acyl-CoA. Prefers C(26:0)-CoA over C(18:1)-CoA. TG synthesis activity increases in M.tuberculosis upon oxygen depletion and NO treatment, with concomitant accumulation of TG in inclusion bodies. As disruption of the gene encoding this protein obviates TG synthesis this seems to be the major enzyme involved in production of TG. Has no wax synthase activity to produce wax esters. The sequence is that of Probable diacyglycerol O-acyltransferase tgs1 (tgs1) from Mycobacterium tuberculosis (strain ATCC 25618 / H37Rv).